We begin with the raw amino-acid sequence, 259 residues long: 14-3-3-like protein (259 aa).

This sequence belongs to the 14-3-3 family.

This is 14-3-3-like protein from Helianthus annuus (Common sunflower).